A 421-amino-acid chain; its full sequence is Gamma-glutamyl phosphate reductase (421 aa).

Belongs to the gamma-glutamyl phosphate reductase family.

Its subcellular location is the cytoplasm. It carries out the reaction L-glutamate 5-semialdehyde + phosphate + NADP(+) = L-glutamyl 5-phosphate + NADPH + H(+). The protein operates within amino-acid biosynthesis; L-proline biosynthesis; L-glutamate 5-semialdehyde from L-glutamate: step 2/2. Its function is as follows. Catalyzes the NADPH-dependent reduction of L-glutamate 5-phosphate into L-glutamate 5-semialdehyde and phosphate. The product spontaneously undergoes cyclization to form 1-pyrroline-5-carboxylate. The polypeptide is Gamma-glutamyl phosphate reductase (Acinetobacter baumannii (strain AYE)).